Here is a 98-residue protein sequence, read N- to C-terminus: Ferredoxin-like protein (98 aa).

It to ferredoxins from P.putida and C.tartarivorum, ferredoxin I from A.vinelandii, ferredoxin II from D.desulfuricans.

Functionally, could be a 3Fe-4S cluster-containing protein. This is Ferredoxin-like protein (fixX) from Rhizobium leguminosarum bv. trifolii.